Here is a 60-residue protein sequence, read N- to C-terminus: Large ribosomal subunit protein uL30 (60 aa).

It belongs to the universal ribosomal protein uL30 family. Part of the 50S ribosomal subunit.

The chain is Large ribosomal subunit protein uL30 from Pseudoalteromonas translucida (strain TAC 125).